A 602-amino-acid chain; its full sequence is Aspartate--tRNA(Asp/Asn) ligase (602 aa).

Glu176 contacts L-aspartate. Residues 200-203 are aspartate; sequence QQFK. The L-aspartate site is built by Arg222 and His452. 222–224 lines the ATP pocket; sequence RDE. Glu490 provides a ligand contact to ATP. Residue Arg497 coordinates L-aspartate. 542 to 545 serves as a coordination point for ATP; the sequence is GIDR.

It belongs to the class-II aminoacyl-tRNA synthetase family. Type 1 subfamily. Homodimer.

It is found in the cytoplasm. It catalyses the reaction tRNA(Asx) + L-aspartate + ATP = L-aspartyl-tRNA(Asx) + AMP + diphosphate. Functionally, aspartyl-tRNA synthetase with relaxed tRNA specificity since it is able to aspartylate not only its cognate tRNA(Asp) but also tRNA(Asn). Reaction proceeds in two steps: L-aspartate is first activated by ATP to form Asp-AMP and then transferred to the acceptor end of tRNA(Asp/Asn). The sequence is that of Aspartate--tRNA(Asp/Asn) ligase from Rickettsia bellii (strain OSU 85-389).